A 158-amino-acid chain; its full sequence is Siroheme decarboxylase beta subunit (158 aa).

The protein belongs to the Ahb/Nir family. Forms a heterodimer composed of AhbA and AhbB.

It catalyses the reaction siroheme + 2 H(+) = 12,18-didecarboxysiroheme + 2 CO2. It participates in porphyrin-containing compound metabolism; protoheme biosynthesis. Functionally, involved in siroheme-dependent heme b biosynthesis. Catalyzes the decarboxylation of siroheme into didecarboxysiroheme. In Oleidesulfovibrio alaskensis (strain ATCC BAA-1058 / DSM 17464 / G20) (Desulfovibrio alaskensis), this protein is Siroheme decarboxylase beta subunit.